We begin with the raw amino-acid sequence, 337 residues long: Monoacylglycerol lipase abhd6-B (337 aa).

Residues 1–19 (MDIDVLNMFLVAGGTLLVP) lie on the Extracellular side of the membrane. The helical; Signal-anchor for type II membrane protein transmembrane segment at 20–42 (LLAFMTSFLLWPAALIRIYYWYW) threads the bilayer. Topologically, residues 43–337 (RRALGMQVKY…QSTDNHKKHD (295 aa)) are cytoplasmic. An AB hydrolase-1 domain is found at 72–313 (PSVLMLHGFS…CGHSVVMERP (242 aa)). Residue serine 148 is the Nucleophile of the active site. Residues aspartate 278 and histidine 306 each act as charge relay system in the active site.

The protein belongs to the AB hydrolase superfamily.

The protein resides in the late endosome membrane. Its subcellular location is the lysosome membrane. The protein localises to the mitochondrion membrane. It carries out the reaction Hydrolyzes glycerol monoesters of long-chain fatty acids.. It catalyses the reaction 1-octanoylglycerol + H2O = octanoate + glycerol + H(+). The enzyme catalyses 1-decanoylglycerol + H2O = decanoate + glycerol + H(+). The catalysed reaction is 1-dodecanoylglycerol + H2O = dodecanoate + glycerol + H(+). It carries out the reaction 1-tetradecanoylglycerol + H2O = tetradecanoate + glycerol + H(+). It catalyses the reaction 2-hexadecanoylglycerol + H2O = glycerol + hexadecanoate + H(+). The enzyme catalyses 2-(9Z-octadecenoyl)-glycerol + H2O = glycerol + (9Z)-octadecenoate + H(+). The catalysed reaction is 1-(9Z-octadecenoyl)-glycerol + H2O = glycerol + (9Z)-octadecenoate + H(+). It carries out the reaction 2-(9Z,12Z-octadecadienoyl)-glycerol + H2O = (9Z,12Z)-octadecadienoate + glycerol + H(+). It catalyses the reaction 2-(5Z,8Z,11Z,14Z-eicosatetraenoyl)-glycerol + H2O = glycerol + (5Z,8Z,11Z,14Z)-eicosatetraenoate + H(+). The enzyme catalyses 1-(5Z,8Z,11Z,14Z-eicosatetraenoyl)-glycerol + H2O = glycerol + (5Z,8Z,11Z,14Z)-eicosatetraenoate + H(+). The catalysed reaction is 1-(9Z,12Z-octadecadienoyl)-glycerol + H2O = (9Z,12Z)-octadecadienoate + glycerol + H(+). It carries out the reaction 3-(9Z-octadecenoyl)-sn-glycero-1-phospho-(3'-(9Z-octadecenoyl)-1'-sn-glycerol) + H2O = 3-(9Z-octadecenoyl)-sn-glycero-1-phospho-(1'-sn-glycerol) + (9Z)-octadecenoate + H(+). It catalyses the reaction (S,S)-2-(9Z-octadecenoyl)-sn-glycero-1-phospho-(2'-(9Z-octadecenoyl)-1'-sn-glycerol) + H2O = (S,S)-2-(9Z-octadecenoyl)-sn-glycero-1-phospho-(1'-sn-glycerol) + (9Z)-octadecenoate + H(+). The enzyme catalyses (R,R)-2-(9Z-octadecenoyl)-sn-glycero-3-phospho-(2'-(9Z-octadecenoyl)-3'-sn-glycerol) + H2O = (R,R)-2-(9Z-octadecenoyl)-sn-glycero-3-phospho-(3'-sn-glycerol) + (9Z)-octadecenoate + H(+). Functionally, lipase that preferentially hydrolysis medium-chain saturated monoacylglycerols including 2-arachidonoylglycerol. Through 2-arachidonoylglycerol degradation may regulate endocannabinoid signaling pathways. Also has a lysophosphatidyl lipase activity with a preference for lysophosphatidylglycerol among other lysophospholipids. Also able to degrade bis(monoacylglycero)phosphate (BMP) and constitutes the major enzyme for BMP catabolism. BMP, also known as lysobisphosphatidic acid, is enriched in late endosomes and lysosomes and plays a key role in the formation of intraluminal vesicles and in lipid sorting. This Xenopus laevis (African clawed frog) protein is Monoacylglycerol lipase abhd6-B (abhd6-b).